A 142-amino-acid chain; its full sequence is Cytidine deaminase (142 aa).

Residues 9 to 139 (RQLEALKRAA…ELLPMAFGPS (131 aa)) form the CMP/dCMP-type deaminase domain. 50–52 (NVE) contacts substrate. A Zn(2+)-binding site is contributed by cysteine 61. Glutamate 63 functions as the Proton donor in the catalytic mechanism. Positions 96 and 99 each coordinate Zn(2+).

This sequence belongs to the cytidine and deoxycytidylate deaminase family. Homodimer. Zn(2+) is required as a cofactor.

It carries out the reaction cytidine + H2O + H(+) = uridine + NH4(+). The enzyme catalyses 2'-deoxycytidine + H2O + H(+) = 2'-deoxyuridine + NH4(+). Its function is as follows. This enzyme scavenges exogenous and endogenous cytidine and 2'-deoxycytidine for UMP synthesis. The polypeptide is Cytidine deaminase (CDD1) (Saccharomyces cerevisiae (strain ATCC 204508 / S288c) (Baker's yeast)).